We begin with the raw amino-acid sequence, 229 residues long: Ribonuclease 3 (229 aa).

The 126-residue stretch at 7–132 (LRAFESRIGH…VIAAVYLDAG (126 aa)) folds into the RNase III domain. Glu-45 contributes to the Mg(2+) binding site. Asp-49 is a catalytic residue. Mg(2+) is bound by residues Asp-118 and Glu-121. Residue Glu-121 is part of the active site. In terms of domain architecture, DRBM spans 157–226 (DAKTALQEWA…ARALLARMEA (70 aa)).

The protein belongs to the ribonuclease III family. In terms of assembly, homodimer. It depends on Mg(2+) as a cofactor.

It is found in the cytoplasm. The enzyme catalyses Endonucleolytic cleavage to 5'-phosphomonoester.. Its function is as follows. Digests double-stranded RNA. Involved in the processing of primary rRNA transcript to yield the immediate precursors to the large and small rRNAs (23S and 16S). Processes some mRNAs, and tRNAs when they are encoded in the rRNA operon. Processes pre-crRNA and tracrRNA of type II CRISPR loci if present in the organism. In Cereibacter sphaeroides (strain ATCC 17025 / ATH 2.4.3) (Rhodobacter sphaeroides), this protein is Ribonuclease 3.